The following is a 444-amino-acid chain: Acyl-CoA 6-desaturase (444 aa).

At 1-130 the chain is on the cytoplasmic side; the sequence is MGGGGQQTDR…EAEGCFKTQP (130 aa). Residues 18–95 enclose the Cytochrome b5 heme-binding domain; that stretch reads FSSYTWEEVQ…LKPLLIGELE (78 aa). Residues 131-151 traverse the membrane as a helical segment; it reads LFFALHLGHILLLEAIAFMMV. The Lumenal segment spans residues 152–157; that stretch reads WYFGTG. A helical transmembrane segment spans residues 158–178; that stretch reads WINTLIVAVILATAQSQAGWL. The Cytoplasmic portion of the chain corresponds to 179-264; sequence QHDFGHLSVF…KHLPYNHQHK (86 aa). The Histidine box-1 signature appears at 180–184; that stretch reads HDFGH. A Histidine box-2 motif is present at residues 217–221; sequence HFQHH. The chain crosses the membrane as a helical span at residues 265–285; that stretch reads YFFFIGPPLLIPVYFQFQIFH. Residues 286-305 lie on the Lumenal side of the membrane; the sequence is NMISHGMWVDLLWCISYYVR. The chain crosses the membrane as a helical span at residues 306-326; that stretch reads YFLCYTQFYGVFWAIILFNFV. Over 327–444 the chain is Cytoplasmic; it reads RFMESHWFVW…ELWLDAYLNK (118 aa). The Histidine box-3 signature appears at 382-386; it reads QIEHH.

It belongs to the fatty acid desaturase type 1 family.

It localises to the endoplasmic reticulum membrane. The enzyme catalyses (9Z,12Z)-octadecadienoyl-CoA + 2 Fe(II)-[cytochrome b5] + O2 + 2 H(+) = (6Z,9Z,12Z)-octadecatrienoyl-CoA + 2 Fe(III)-[cytochrome b5] + 2 H2O. The catalysed reaction is (9Z,12Z,15Z)-octadecatrienoyl-CoA + 2 Fe(II)-[cytochrome b5] + O2 + 2 H(+) = (6Z,9Z,12Z,15Z)-octadecatetraenoyl-CoA + 2 Fe(III)-[cytochrome b5] + 2 H2O. It catalyses the reaction (8Z,11Z,14Z,17Z)-eicosatetraenoyl-CoA + 2 Fe(II)-[cytochrome b5] + O2 + 2 H(+) = (5Z,8Z,11Z,14Z,17Z)-eicosapentaenoyl-CoA + 2 Fe(III)-[cytochrome b5] + 2 H2O. It carries out the reaction (8Z,11Z,14Z)-eicosatrienoyl-CoA + 2 Fe(II)-[cytochrome b5] + O2 + 2 H(+) = (5Z,8Z,11Z,14Z)-eicosatetraenoyl-CoA + 2 Fe(III)-[cytochrome b5] + 2 H2O. The protein operates within lipid metabolism; polyunsaturated fatty acid biosynthesis. Its function is as follows. Fatty acid desaturase with bifunctional delta-5 and delta-6 activities. Component of a lipid metabolic pathway that catalyzes the biosynthesis of polyunsaturated fatty acids (PUFA) with preference toward n-3 substrates and Delta-6 function. The polypeptide is Acyl-CoA 6-desaturase (fads2) (Danio rerio (Zebrafish)).